A 397-amino-acid chain; its full sequence is uncharacterized protein (397 aa).

Helical transmembrane passes span 142–162 (WETI…VGIA), 191–211 (SQLL…SVVL), 242–258 (ALTG…TYFL), and 260–280 (APWL…SAGF).

It belongs to the cation diffusion facilitator (CDF) transporter (TC 2.A.4) family. SLC30A subfamily.

The protein localises to the membrane. This is an uncharacterized protein from Schizosaccharomyces pombe (strain 972 / ATCC 24843) (Fission yeast).